A 201-amino-acid polypeptide reads, in one-letter code: MPSFYKLRKKIWKSLYLLIIVGMLYIGYILIKSGYINEKNDINVTKKNLNLRDNKNYDLKYNVILQDSIFEGVNKNLNAYKIKTERAIKESGNKYKLDIINAIYNINQDQALIITAKEGFLDQESNILDLKNDIKLFFDEIIFNTNNARINLVNQNIYGNSSAKLLYKNSSITSDSFNTMDENNIIIFKGNVSTIIDLSDY.

Residues Ile11–Ile31 traverse the membrane as a helical segment.

It is found in the membrane. This is an uncharacterized protein from Rickettsia prowazekii (strain Madrid E).